The primary structure comprises 68 residues: Pleurocidin (68 aa).

An N-terminal signal peptide occupies residues 1 to 22 (MKFTATFLMIAIFVLMVEPGEC). The propeptide occupies 48-68 (GDKQELNKRAVDEDPNVIVFE).

The protein belongs to the pleurocidin family. As to expression, goblet cells.

The protein localises to the secreted. In terms of biological role, antimicrobial peptide with potent activity against Gram-positive and Gram-negative bacteria. Activity against E.coli and B.subtilis. Weaker activity against L.mucor, s.marcescens and P.aeruginosa. May play a role in innate host defense. The protein is Pleurocidin (ple2) of Pseudopleuronectes americanus (Winter flounder).